Consider the following 554-residue polypeptide: Membrane protein insertase YidC (554 aa).

The next 5 helical transmembrane spans lie at 7 to 24 (VLWVIFFMSAVMLYDNWQ), 362 to 382 (FVGNWGWAIVLLTVLIKAVFF), 436 to 456 (LPVVIQIPVFISLYWVLLASV), 475 to 495 (PFFILPVLMAVSMFVQTSLNP), and 510 to 530 (PIAFSVMFFFFPAGLVLYYVV).

It belongs to the OXA1/ALB3/YidC family. Type 1 subfamily. In terms of assembly, interacts with the Sec translocase complex via SecD. Specifically interacts with transmembrane segments of nascent integral membrane proteins during membrane integration.

Its subcellular location is the cell inner membrane. Required for the insertion and/or proper folding and/or complex formation of integral membrane proteins into the membrane. Involved in integration of membrane proteins that insert both dependently and independently of the Sec translocase complex, as well as at least some lipoproteins. Aids folding of multispanning membrane proteins. The sequence is that of Membrane protein insertase YidC from Burkholderia ambifaria (strain MC40-6).